The chain runs to 457 residues: Cyanidin 3-O-galactoside 2''-O-xylosyltransferase FGGT1 (457 aa).

The protein belongs to the UDP-glycosyltransferase family. As to expression, expressed in ovaries.

It catalyses the reaction cyanidin 3-O-beta-D-galactoside + UDP-alpha-D-xylose = cyanidin 3-O-[beta-D-xylosyl-(1-&gt;2)-beta-D-galactoside] + UDP + H(+). It functions in the pathway pigment biosynthesis; anthocyanin biosynthesis. In terms of biological role, xylosyltransferase involved in anthocyanin biosynthesis by catalyzing the xylosylation of cyanidin 3-O-galactoside to form cyanidin 3-O-[2-O-(-xylosyl)-galactoside]. Required for the accumulation of anthocyanin in red-fleshed kiwifruit varieties. The protein is Cyanidin 3-O-galactoside 2''-O-xylosyltransferase FGGT1 of Actinidia chinensis var. chinensis (Chinese soft-hair kiwi).